A 126-amino-acid chain; its full sequence is Small ribosomal subunit protein uS13c (126 aa).

The segment at 97–126 (PLRGQRTRTNARTRRGGKKTVAGKKKAPRK) is disordered. A compositionally biased stretch (basic residues) spans 101–126 (QRTRTNARTRRGGKKTVAGKKKAPRK).

This sequence belongs to the universal ribosomal protein uS13 family. Part of the 30S ribosomal subunit.

It is found in the plastid. Its subcellular location is the chloroplast. In terms of biological role, located at the top of the head of the 30S subunit, it contacts several helices of the 16S rRNA. In Porphyra purpurea (Red seaweed), this protein is Small ribosomal subunit protein uS13c.